A 213-amino-acid polypeptide reads, in one-letter code: ATP synthase subunit delta 2 (213 aa).

The protein belongs to the ATPase delta chain family. In terms of assembly, F-type ATPases have 2 components, F(1) - the catalytic core - and F(0) - the membrane proton channel. F(1) has five subunits: alpha(3), beta(3), gamma(1), delta(1), epsilon(1). F(0) has three main subunits: a(1), b(2) and c(10-14). The alpha and beta chains form an alternating ring which encloses part of the gamma chain. F(1) is attached to F(0) by a central stalk formed by the gamma and epsilon chains, while a peripheral stalk is formed by the delta and b chains.

It is found in the cell inner membrane. Functionally, f(1)F(0) ATP synthase produces ATP from ADP in the presence of a proton or sodium gradient. F-type ATPases consist of two structural domains, F(1) containing the extramembraneous catalytic core and F(0) containing the membrane proton channel, linked together by a central stalk and a peripheral stalk. During catalysis, ATP synthesis in the catalytic domain of F(1) is coupled via a rotary mechanism of the central stalk subunits to proton translocation. In terms of biological role, this protein is part of the stalk that links CF(0) to CF(1). It either transmits conformational changes from CF(0) to CF(1) or is implicated in proton conduction. The chain is ATP synthase subunit delta 2 from Brachyspira hyodysenteriae (strain ATCC 49526 / WA1).